A 267-amino-acid chain; its full sequence is Stomatin-3 (267 aa).

A helical membrane pass occupies residues 17 to 37 (FVALICAWAFLLLTFPVSIFF).

It belongs to the band 7/mec-2 family.

The protein resides in the membrane. In Caenorhabditis elegans, this protein is Stomatin-3 (sto-3).